Here is a 928-residue protein sequence, read N- to C-terminus: MAELLACLQSISAHAKDMMALARSRGATGSRPTPTTLPHFDELLPPNLDFVRTRLQEARLPPKAIKGTLSAYESACARWKHDLEEAFDRTAHSISPHNFQRLAQLRTRLYVEQVQKWLYEVLQVPERWKAEMEKQRAHINATMGPDKTTGPGKRSRPKFHSEYTPVLELYFHFNAYPTYADRRILAEKTGMLTRQITVWFQNHRRRAKGPLPRMSPTAKIPMEEFERQLENLARKIVPVLLPPTLRRFAPGNENKSLAAASRQSAGKSSKNAKRLSELEKAQQVPRKPSENAEAGPSSLGAMLARVMHNDSVSKKKSKKAKKEKASQQNVVCDVEMRDATATKEKRRKMKKLPRAAGQPFDVPMDVERADKASRKAMKKAKKSPRAFDSRAELAFAQAAYPSPSQYAYVHSRKPSAQKPSSDSPRKDFGQLGKGRPSSNSTSSTVPPHRVSSRLNAMRPPYAFPAPYNAAAVPLTFSVASSTQFAFATDNRSFGFAERTPRKATVPAACTLIDYLISKFAGLRLLCVEQSVSSRSISLSTSESGKLAGLRTEGLTTGEASGVQTHVDSYAARRAITYVPPSAPLDCVVHNLARALQLKQVRPMVLAQPVVQPDAFAPFIARAERRARRKERKQRKALEEKQAKKDRKERQKASRSQRDSPSMDADVQSRASSVASTSSLPARKSSKKSRKSKGESAASSRATSVASSVRTPSLSSTSSRRSSGMSMPGTPRPEQDLPIMATADFNFAGDEDVTMTPDLAAQLFGEDEDGAAALGQMQYEEFSPDMLTFTSTAGGALSDMTADVNMPDLGNAYTSQQSVDDMNWTGFGLDAQNSASPGLFGDESNTGLDWLLSHNLLGDTQMSDLSYTAPTSTPSQINILGSTYACELGGSDSLGTPFNMNDWTFGLGACDDGFAGFGNNLLGGTAVAV.

The segment at residues 152-211 (GKRSRPKFHSEYTPVLELYFHFNAYPTYADRRILAEKTGMLTRQITVWFQNHRRRAKGPL) is a DNA-binding region (homeobox). Disordered regions lie at residues 255–296 (KSLA…EAGP), 310–329 (DSVS…SQQN), 340–359 (TATK…AGQP), 406–451 (YAYV…HRVS), and 626–736 (ARRK…EQDL). Basic residues predominate over residues 344–353 (EKRRKMKKLP). Positions 635–657 (KALEEKQAKKDRKERQKASRSQR) are enriched in basic and acidic residues. 2 stretches are compositionally biased toward low complexity: residues 668–682 (SRAS…LPAR) and 694–728 (ESAA…SMPG).

Its subcellular location is the nucleus. Functionally, specifies A-alpha-4 mating-type. May regulate the expression of genes specific to the homokaryotic cell type. This Schizophyllum commune (Split gill fungus) protein is Mating-type protein A-alpha Y4.